Consider the following 280-residue polypeptide: 4-diphosphocytidyl-2-C-methyl-D-erythritol kinase (280 aa).

K8 is an active-site residue. Position 91-101 (91-101 (PVAAGLAGGST)) interacts with ATP. D133 is a catalytic residue.

The protein belongs to the GHMP kinase family. IspE subfamily.

It carries out the reaction 4-CDP-2-C-methyl-D-erythritol + ATP = 4-CDP-2-C-methyl-D-erythritol 2-phosphate + ADP + H(+). Its pathway is isoprenoid biosynthesis; isopentenyl diphosphate biosynthesis via DXP pathway; isopentenyl diphosphate from 1-deoxy-D-xylulose 5-phosphate: step 3/6. Functionally, catalyzes the phosphorylation of the position 2 hydroxy group of 4-diphosphocytidyl-2C-methyl-D-erythritol. The polypeptide is 4-diphosphocytidyl-2-C-methyl-D-erythritol kinase (Clostridium botulinum (strain Loch Maree / Type A3)).